We begin with the raw amino-acid sequence, 326 residues long: MSHQLTFADSEFSSKRRQTRKEIFLSRMEQILPWQNMVEVIEPFYPKAGNGRRPYPLETMLRIHCMQHWYNLSDGAMEDALYEIASMRLFARLSLDSALPDRTTIMNFRHLLEQHQLARQLFKTINRWLAEAGVMMTQGTLVDATIIEAPSSTKNKEQQRDPEMHQTKKGNQWHFGMKAHIGVDAKSGLTHSLVTTAANEHDLNQLGNLLHGEEQFVSADAGYQGAPQREELAEVDVDWLIAERPGKVRTLKQHPRKNKTAINIEYMKASIRARVEHPFRIIKRQFGFVKARYKGLLKNDNQLAMLFTLANLFRADQMIRQWERSH.

It belongs to the transposase 11 family.

Its function is as follows. Involved in the transposition of the insertion sequence IS5. The sequence is that of Transposase InsH for insertion sequence element IS5A (insH1) from Escherichia coli (strain K12).